Consider the following 245-residue polypeptide: MEMGKMLVVYMTLGYPNVQSFKDFIIGAVENGADILELGIPPKYAKYDGPVIRKSYDKVKGLDIWPLIEDIRKDVGVPIIALTYLEDWVDQLENFLNMIKDVKLDGILFPDLLIDYIDDLDKIDGIIKNKGLKNVIFTSPSVPDLLIHKVSKISDLFLYYGVRPTTGVPIPVSVKQLINRVRNLVENKLIVGFGLSSESDLRDALSAGADGIAIGTVFIEEIERNGVKSAINLVKKFRAILDEYK.

Residues Glu37 and Asp48 each act as proton acceptor in the active site.

This sequence belongs to the TrpA family. As to quaternary structure, tetramer of two alpha and two beta chains.

It carries out the reaction (1S,2R)-1-C-(indol-3-yl)glycerol 3-phosphate + L-serine = D-glyceraldehyde 3-phosphate + L-tryptophan + H2O. Its pathway is amino-acid biosynthesis; L-tryptophan biosynthesis; L-tryptophan from chorismate: step 5/5. Functionally, the alpha subunit is responsible for the aldol cleavage of indoleglycerol phosphate to indole and glyceraldehyde 3-phosphate. The sequence is that of Tryptophan synthase alpha chain from Saccharolobus solfataricus (strain ATCC 35092 / DSM 1617 / JCM 11322 / P2) (Sulfolobus solfataricus).